Here is a 774-residue protein sequence, read N- to C-terminus: Lysyl oxidase homolog 2 (774 aa).

A signal peptide spans 1–25 (MERPLCSHLCSCLAMLALLSPLSLA). SRCR domains lie at 58 to 159 (LRLA…VVCS), 188 to 302 (IRAI…VSCV), 326 to 425 (VRLR…VRCN), and 435 to 544 (LRLN…VACS). Cystine bridges form between C84/C148, C97/C158, C128/C138, C218/C291, C231/C301, C265/C275, C351/C414, C364/C424, and C395/C405. N-linked (GlcNAc...) asparagine glycosylation is present at N288. N455 carries N-linked (GlcNAc...) (complex) asparagine glycosylation. Intrachain disulfides connect C464–C530, C477–C543, and C511–C521. The lysyl-oxidase like stretch occupies residues 548 to 751 (PDLVLNAEMV…WMYNCHIGGS (204 aa)). Residues D549 and L550 each contribute to the Ca(2+) site. Disulfide bonds link C573-C625, C579-C695, C657-C673, and C663-C685. Residues H626, H628, and H630 each coordinate Cu cation. N-linked (GlcNAc...) (complex) asparagine glycosylation is present at N644. A cross-link (lysine tyrosylquinone (Lys-Tyr)) is located at residues 653–689 (KASFCLEDTECEGDIQKNYECANFGDQGITMGCWDMY). Y689 carries the 2',4',5'-topaquinone modification. Residues E722, D724, N727, and N728 each coordinate Ca(2+). An intrachain disulfide couples C732 to C746.

This sequence belongs to the lysyl oxidase family. Component of some chromatin repressor complex. Interacts with SNAI1. Interacts with TAF10. Interacts with HSPA5. Interacts with EFEMP2. Requires Cu cation as cofactor. The cofactor is lysine tyrosylquinone residue. The lysine tyrosylquinone cross-link (LTQ) is generated by condensation of the epsilon-amino group of a lysine with a topaquinone produced by oxidation of tyrosine. In terms of processing, N-glycosylated. N-glycosylation on Asn-455 and Asn-644 may be essential for proper folding and secretion; may be composed of a fucosylated carbohydrates attached to a trimannose N-linked glycan core. Expressed in many tissues. Highest expression in reproductive tissues, placenta, uterus and prostate. In esophageal epithelium, expressed in the basal, prickle and granular cell layers. Up-regulated in a number of cancers cells and tissues.

Its subcellular location is the secreted. It localises to the extracellular space. The protein localises to the extracellular matrix. The protein resides in the basement membrane. It is found in the nucleus. Its subcellular location is the chromosome. It localises to the endoplasmic reticulum. The enzyme catalyses L-lysyl-[protein] + O2 + H2O = (S)-2-amino-6-oxohexanoyl-[protein] + H2O2 + NH4(+). With respect to regulation, according to some reports, it is inhibited by beta-aminopropionitrile (BAPN). According to another report, it is not inhibited by beta-aminopropionitrile (BAPN). Specifically inhibited by a mouse monoclonal antibody AB0023, inhibition occurs in a non-competitive manner. In terms of biological role, mediates the post-translational oxidative deamination of lysine residues on target proteins leading to the formation of deaminated lysine (allysine). Acts as a transcription corepressor and specifically mediates deamination of trimethylated 'Lys-4' of histone H3 (H3K4me3), a specific tag for epigenetic transcriptional activation. Shows no activity against histone H3 when it is trimethylated on 'Lys-9' (H3K9me3) or 'Lys-27' (H3K27me3) or when 'Lys-4' is monomethylated (H3K4me1) or dimethylated (H3K4me2). Also mediates deamination of methylated TAF10, a member of the transcription factor IID (TFIID) complex, which induces release of TAF10 from promoters, leading to inhibition of TFIID-dependent transcription. LOXL2-mediated deamination of TAF10 results in transcriptional repression of genes required for embryonic stem cell pluripotency including POU5F1/OCT4, NANOG, KLF4 and SOX2. Involved in epithelial to mesenchymal transition (EMT) via interaction with SNAI1 and participates in repression of E-cadherin CDH1, probably by mediating deamination of histone H3. During EMT, involved with SNAI1 in negatively regulating pericentromeric heterochromatin transcription. SNAI1 recruits LOXL2 to pericentromeric regions to oxidize histone H3 and repress transcription which leads to release of heterochromatin component CBX5/HP1A, enabling chromatin reorganization and acquisition of mesenchymal traits. Interacts with the endoplasmic reticulum protein HSPA5 which activates the IRE1-XBP1 pathway of the unfolded protein response, leading to expression of several transcription factors involved in EMT and subsequent EMT induction. Involved in E-cadherin repression following hypoxia, a hallmark of EMT believed to amplify tumor aggressiveness, suggesting that it may play a role in tumor progression. When secreted into the extracellular matrix, promotes cross-linking of extracellular matrix proteins by mediating oxidative deamination of peptidyl lysine residues in precursors to fibrous collagen and elastin. Acts as a regulator of sprouting angiogenesis, probably via collagen IV scaffolding. Acts as a regulator of chondrocyte differentiation, probably by regulating expression of factors that control chondrocyte differentiation. This is Lysyl oxidase homolog 2 (LOXL2) from Homo sapiens (Human).